We begin with the raw amino-acid sequence, 188 residues long: MSIKSDKWIRRMAAEYGMIEPFEPGQVKQKDGHSIVSYGTSSYGYDIRCSDEFKLFTNLNSTIVDPKRFDSNSFVDLKNDICIIPPNSFALARTVEYFRIPRNVLTICLGKSTYARCGIIVNVTPFEPEWEGYVTLEFSNTTPLPAKIYANEGVAQVIFFEADEVCETSYKDRKGKYQFQQGVTLPKI.

DCTP contacts are provided by residues 111 to 116 (KSTYAR), 135 to 137 (TLE), Gln156, Tyr170, and Gln180. The Proton donor/acceptor role is filled by Glu137.

It belongs to the dCTP deaminase family. In terms of assembly, homotrimer.

It catalyses the reaction dCTP + H2O + H(+) = dUTP + NH4(+). It participates in pyrimidine metabolism; dUMP biosynthesis; dUMP from dCTP (dUTP route): step 1/2. Functionally, catalyzes the deamination of dCTP to dUTP. The protein is dCTP deaminase of Nitrosomonas eutropha (strain DSM 101675 / C91 / Nm57).